Here is a 267-residue protein sequence, read N- to C-terminus: Interleukin-1 beta (267 aa).

The propeptide occupies 1 to 114 (MAIVPEPAKE…ETCNDDFVCD (114 aa)).

This sequence belongs to the IL-1 family. In terms of assembly, (Microbial infection) Interacts with African swine fever virus (ASFV) protein L83L. Monomer. In its precursor form, weakly interacts with full-length MEFV; the mature cytokine does not interact at all. Interacts with integrins ITGAV:ITGBV and ITGA5:ITGB1; integrin-binding is required for IL1B signaling. Interacts with cargo receptor TMED10; the interaction is direct and is required for the secretion of IL1B mature form. Interacts with HSP90AB1; the interaction facilitates cargo translocation into the ERGIC. Interacts with HSP90B1; the interaction facilitates cargo translocation into the ERGIC.

The protein resides in the cytoplasm. It localises to the cytosol. Its subcellular location is the secreted. The protein localises to the lysosome. It is found in the extracellular exosome. Its function is as follows. Potent pro-inflammatory cytokine. Initially discovered as the major endogenous pyrogen, induces prostaglandin synthesis, neutrophil influx and activation, T-cell activation and cytokine production, B-cell activation and antibody production, and fibroblast proliferation and collagen production. Promotes Th17 differentiation of T-cells. Synergizes with IL12/interleukin-12 to induce IFNG synthesis from T-helper 1 (Th1) cells. Plays a role in angiogenesis by inducing VEGF production synergistically with TNF and IL6. Involved in transduction of inflammation downstream of pyroptosis: its mature form is specifically released in the extracellular milieu by passing through the gasdermin-D (GSDMD) pore. The chain is Interleukin-1 beta (IL1B) from Sus scrofa (Pig).